Here is a 452-residue protein sequence, read N- to C-terminus: MGKYFGTDGVRGEANVELTPEMAFKLGRFGGYVLSQHELGTPKVYVGRDTRISGQMLASSLISGLLSVGIEVYDLGVIATPGVAYLVKKDGASAGVMISASHNPALDNGIKFFGGDGYKLEDEKELEIEALIDAEEDTLPRPSAQGLGMLHDYIEGVRKYQAFLKTTAEGNFEGYKVVLDTANGAAYTSARAVFADLEANLTVIGENPDGLNINVKVGSTHPEAMAKKVVETGSDLGLAFDGDADRLIAVDENGEIVDGDKIMFIVGKYLLGQGKLAQDTLVTTVMSNLGFHLALEEAGINSVITAVGDRYVVEEMKKNNYNFGGEQSGHMIFLDYNTTGDGQLSAIQLLKVMRETGKSLSELASEVTIYPQKLVNVRVKDNAAKKSAMDVPAIQKVISEMETSMNGKGRILVRPSGTEPLLRVMAEAPTHEEVNHVVDTIVEVVEAEIGVK.

The active-site Phosphoserine intermediate is the Ser-101. Mg(2+) contacts are provided by Ser-101, Asp-241, Asp-243, and Asp-245. Ser-101 carries the post-translational modification Phosphoserine.

The protein belongs to the phosphohexose mutase family. Requires Mg(2+) as cofactor. Activated by phosphorylation.

It carries out the reaction alpha-D-glucosamine 1-phosphate = D-glucosamine 6-phosphate. Its function is as follows. Catalyzes the conversion of glucosamine-6-phosphate to glucosamine-1-phosphate. This Lactococcus lactis subsp. lactis (strain IL1403) (Streptococcus lactis) protein is Phosphoglucosamine mutase.